Consider the following 278-residue polypeptide: 4-deoxy-L-threo-5-hexosulose-uronate ketol-isomerase (278 aa).

4 residues coordinate Zn(2+): H196, H198, E203, and H245.

This sequence belongs to the KduI family. The cofactor is Zn(2+).

The catalysed reaction is 5-dehydro-4-deoxy-D-glucuronate = 3-deoxy-D-glycero-2,5-hexodiulosonate. The protein operates within glycan metabolism; pectin degradation; 2-dehydro-3-deoxy-D-gluconate from pectin: step 4/5. Functionally, catalyzes the isomerization of 5-dehydro-4-deoxy-D-glucuronate to 3-deoxy-D-glycero-2,5-hexodiulosonate. In Burkholderia cenocepacia (strain ATCC BAA-245 / DSM 16553 / LMG 16656 / NCTC 13227 / J2315 / CF5610) (Burkholderia cepacia (strain J2315)), this protein is 4-deoxy-L-threo-5-hexosulose-uronate ketol-isomerase.